The chain runs to 588 residues: MWILVSWLALVARLVAGTQCPDGQFCPVACCLDQGGANYSCCNPLLDTWPIITSRRLDGSCQIRDHCPDGYSCLLTVSGTSSCCPFSEGVSCDDGQHCCPRGFHCSADGKSCSQISDSLLGAVQCPGSQFECPDSATCCIMIDGSWGCCPMPQASCCEDRVHCCPHGASCDLVHTRCISPTGTHPLLKKFPAQRTNRAVASFSVVCPDAKTQCPDDSTCCELPTGKYGCCPMPNAICCSDHLHCCPQDTVCDLIQSKCISKDYTTDLMTKLPGYPVNEVKCDLEVSCPDGYTCCRLNTGAWGCCPFTKAVCCEDHIHCCPAGFQCHTETGTCELGVLQVPWMKKVTASLSLPDPQILKNDVPCDDFSSCPSNNTCCRLSSGDWGCCPMPEAVCCLDHQHCCPQGFKCMDEGYCQKGDRMVAGLEKMPVRQTTLLQHGDIGCDQHTSCPVGQTCCPSLKGSWACCQLPHAVCCEDRQHCCPAGYTCNVKARTCEKDAGSVQPSMDLTFGSKVGNVECGAGHFCHDNQSCCKDSQGGWACCPYVKGVCCRDGRHCCPIGFHCSAKGTKCLRKKTPRWDILLRDPAPRPLL.

Residues 1-17 (MWILVSWLALVARLVAG) form the signal peptide. The N-linked (GlcNAc...) asparagine glycan is linked to Asn38. Disulfide bonds link Cys125–Cys138, Cys132–Cys148, Cys281–Cys293, Cys287–Cys303, Cys294–Cys311, Cys304–Cys318, Cys312–Cys325, Cys319–Cys332, Cys363–Cys375, Cys369–Cys385, Cys394–Cys407, and Cys401–Cys413. N-linked (GlcNAc...) asparagine glycosylation occurs at Asn372. The N-linked (GlcNAc...) asparagine glycan is linked to Asn525.

Belongs to the granulin family. In terms of assembly, progranulin is secreted as a homodimer. Interacts with SLPI; interaction protects progranulin from proteolysis. Interacts (via region corresponding to granulin-7 peptide) with CTSD; stabilizes CTSD and increases its proteolytic activity. Interacts (via region corresponding to granulin-7 peptide) with SORT1; this interaction mediates endocytosis and lysosome delivery of progranulin; interaction occurs at the neuronal cell surface in a stressed nervous system. Interacts with PSAP; facilitates lysosomal delivery of progranulin from the extracellular space and the biosynthetic pathway. Forms a complex with PSAP and M6PR; PSAP bridges the binding between progranulin and M6PR. Forms a complex with PSAP and SORT1; progranulin bridges the interaction between PSAP and SORT1; facilitates lysosomal targeting of PSAP via SORT1; interaction enhances PSAP uptake in primary cortical neurons. Interacts (via regions corresponding to granulin-2 and granulin-7 peptides) with GBA1; this interaction prevents aggregation of GBA1-SCARB2 complex via interaction with HSPA1A upon stress. Interacts (via region corresponding to granulin-7 peptide) with HSPA1A; mediates recruitment of HSPA1A to GBA1 and prevents GBA1 aggregation in response to stress. Post-translationally, cleaved by ELANE; proteolysis is blocked by SLPI and is concentration- and time-dependent and induces CXCL8/IL-8 production; granulin-3 and granulin-4 are resistant to ELANE. Cleaved by CTSL in lysosome thus regulating the maturation and turnover of progranulin within the lysosome. Ubiquitous; most abundant in the spleen and several tissues of endocrine significance.

The protein resides in the secreted. The protein localises to the lysosome. Its function is as follows. Secreted protein that acts as a key regulator of lysosomal function and as a growth factor involved in inflammation, wound healing and cell proliferation. Regulates protein trafficking to lysosomes, and also the activity of lysosomal enzymes. Also facilitates the acidification of lysosomes, causing degradation of mature CTSD by CTSB. In addition, functions as a wound-related growth factor that acts directly on dermal fibroblasts and endothelial cells to promote division, migration and the formation of capillary-like tubule structures. Also promotes epithelial cell proliferation by blocking TNF-mediated neutrophil activation preventing release of oxidants and proteases. Moreover, modulates inflammation in neurons by preserving neurons survival, axonal outgrowth and neuronal integrity. Functionally, inhibits epithelial cell proliferation and induces epithelial cells to secrete IL-8. In terms of biological role, stabilizes CTSD through interaction with CTSD leading to maintain its aspartic-type peptidase activity. The sequence is that of Progranulin (Grn) from Rattus norvegicus (Rat).